The sequence spans 123 residues: Antitoxin RnlB (123 aa).

As to quaternary structure, can form a complex with cognate toxin RnlA. Probably degraded by CplXP and Lon proteases.

Antitoxin component of a type II toxin-antitoxin (TA) system. A labile antitoxin (half-life of 2.1 minutes) that inhibits the endonuclease activity of cognate toxin RnlA but not that of non-cognate toxin LsoA. The polypeptide is Antitoxin RnlB (rnlB) (Escherichia coli (strain K12)).